The sequence spans 160 residues: Arginine repressor (160 aa).

It belongs to the ArgR family.

It is found in the cytoplasm. It functions in the pathway amino-acid biosynthesis; L-arginine biosynthesis [regulation]. Regulates arginine biosynthesis genes. The protein is Arginine repressor of Anaeromyxobacter sp. (strain K).